Here is a 447-residue protein sequence, read N- to C-terminus: Cytochrome P450 monooxygenase aunB (447 aa).

Cys-386 provides a ligand contact to heme.

This sequence belongs to the cytochrome P450 family. It depends on heme as a cofactor.

It catalyses the reaction 2 fonsecin B + NADPH + O2 + H(+) = aurasperone B + NADP(+) + 2 H2O. The catalysed reaction is 2 rubrofusarin B + NADPH + O2 + H(+) = aurasperone A + NADP(+) + 2 H2O. The protein operates within secondary metabolite biosynthesis. Cytochrome P450 monooxygenase; part of the gene cluster that mediates the biosynthesis of aurasperone B, a dimeric gamma-naphthopyrone. The first step in the biosynthesis of aurasperone B is the production of gamma-naphthopyrone precursor YWA1 by the non-reducing polyketide synthase albA, via condensation of one acetyl-CoA starter unit with 6 malonyl-CoA units. YWA1 is then methylated by aunE at position C-6 to yield foncesin which is further methylated at position C-8 by aunD to produce fonsecin B. A key enzyme in the biosynthetic pathway is the cytochrome P450 monooxygenase aunB which catalyzes the oxidative dimerization of fonsecin B to aurasperone B. AunB also catalyzes the oxidative dimerization of rubrofusarin B into aurasperone A. This is Cytochrome P450 monooxygenase aunB from Aspergillus niger (strain ATCC MYA-4892 / CBS 513.88 / FGSC A1513).